A 350-amino-acid chain; its full sequence is Ribosomal RNA large subunit methyltransferase M (350 aa).

Residues S184, 217 to 220 (APGG), D236, D256, and D272 contribute to the S-adenosyl-L-methionine site. K301 serves as the catalytic Proton acceptor.

It belongs to the class I-like SAM-binding methyltransferase superfamily. RNA methyltransferase RlmE family. RlmM subfamily. As to quaternary structure, monomer.

It is found in the cytoplasm. It carries out the reaction cytidine(2498) in 23S rRNA + S-adenosyl-L-methionine = 2'-O-methylcytidine(2498) in 23S rRNA + S-adenosyl-L-homocysteine + H(+). In terms of biological role, catalyzes the 2'-O-methylation at nucleotide C2498 in 23S rRNA. In Marinomonas sp. (strain MWYL1), this protein is Ribosomal RNA large subunit methyltransferase M.